The chain runs to 427 residues: Adenylosuccinate synthetase (427 aa).

GTP-binding positions include 12–18 and 40–42; these read GDEGKGK and GHT. Asp13 acts as the Proton acceptor in catalysis. Mg(2+)-binding residues include Asp13 and Gly40. Residues 13 to 16, 38 to 41, Thr128, Arg142, Gln223, Thr238, and Arg302 contribute to the IMP site; these read DEGK and NAGH. His41 functions as the Proton donor in the catalytic mechanism. 298-304 provides a ligand contact to substrate; that stretch reads TTTGRPR. GTP-binding positions include Arg304, 330 to 332, and 412 to 414; these read KLD and SVG.

This sequence belongs to the adenylosuccinate synthetase family. Homodimer. Mg(2+) is required as a cofactor.

The protein localises to the cytoplasm. The catalysed reaction is IMP + L-aspartate + GTP = N(6)-(1,2-dicarboxyethyl)-AMP + GDP + phosphate + 2 H(+). It participates in purine metabolism; AMP biosynthesis via de novo pathway; AMP from IMP: step 1/2. Functionally, plays an important role in the de novo pathway of purine nucleotide biosynthesis. Catalyzes the first committed step in the biosynthesis of AMP from IMP. This Carboxydothermus hydrogenoformans (strain ATCC BAA-161 / DSM 6008 / Z-2901) protein is Adenylosuccinate synthetase.